The sequence spans 345 residues: UPF0324 membrane protein Cgl0015/cg0018 (345 aa).

Helical transmembrane passes span 15-37, 44-66, 81-103, 105-124, 134-156, 163-185, 205-227, 261-280, 285-307, and 320-342; these read LRTG…VLIA, FSGV…LIQL, LLRL…SLGF, MLAV…ILMG, VLLI…EGVT, VVTA…PFAT, EIAQ…AVVV, VVPL…STVA, VIAA…LGCG, and PFIL…TLLT.

Belongs to the UPF0324 family.

It localises to the cell membrane. This is UPF0324 membrane protein Cgl0015/cg0018 from Corynebacterium glutamicum (strain ATCC 13032 / DSM 20300 / JCM 1318 / BCRC 11384 / CCUG 27702 / LMG 3730 / NBRC 12168 / NCIMB 10025 / NRRL B-2784 / 534).